A 218-amino-acid polypeptide reads, in one-letter code: Capsid protein (218 aa).

At M1 the chain carries N-acetylmethionine; by host. The segment covering M1–G10 has biased composition (low complexity). Positions M1 to D29 are disordered. A compositionally biased stretch (basic residues) spans R11 to S21.

The protein belongs to the cucumovirus capsid protein family.

The protein localises to the virion. In terms of biological role, capsid protein. Probably binds RNA and plays a role in packaging. The sequence is that of Capsid protein from Cucumis sativus (Cucumber).